We begin with the raw amino-acid sequence, 271 residues long: Purine nucleoside phosphorylase 1 (271 aa).

Residues Ser28, His59, 79 to 81, and Ala111 contribute to the phosphate site; that span reads RFH. Ser28 bears the Phosphoserine mark. Glu191 is a binding site for a purine D-ribonucleoside. Ser210 serves as a coordination point for phosphate. A purine D-ribonucleoside is bound at residue Asn233.

This sequence belongs to the PNP/MTAP phosphorylase family. As to quaternary structure, homotrimer.

It carries out the reaction a purine 2'-deoxy-D-ribonucleoside + phosphate = a purine nucleobase + 2-deoxy-alpha-D-ribose 1-phosphate. Its pathway is purine metabolism; purine nucleoside salvage. The purine nucleoside phosphorylases catalyze the phosphorolytic breakdown of the N-glycosidic bond in the beta-(deoxy)ribonucleoside molecules, with the formation of the corresponding free purine bases and pentose-1-phosphate. Cleaves guanosine, inosine, 2'-deoxyguanosine and 2'-deoxyinosine. The polypeptide is Purine nucleoside phosphorylase 1 (punA) (Bacillus subtilis (strain 168)).